Here is a 213-residue protein sequence, read N- to C-terminus: FMN-dependent NADH:quinone oxidoreductase 3 (213 aa).

FMN contacts are provided by residues Ser-10, 16-18 (SVS), and 96-99 (MYNF).

Belongs to the azoreductase type 1 family. In terms of assembly, homodimer. The cofactor is FMN.

It carries out the reaction 2 a quinone + NADH + H(+) = 2 a 1,4-benzosemiquinone + NAD(+). The catalysed reaction is N,N-dimethyl-1,4-phenylenediamine + anthranilate + 2 NAD(+) = 2-(4-dimethylaminophenyl)diazenylbenzoate + 2 NADH + 2 H(+). Functionally, quinone reductase that provides resistance to thiol-specific stress caused by electrophilic quinones. Shows a preference for naphthoquinones such as plumbagin. Also exhibits azoreductase activity. Catalyzes the reductive cleavage of the azo bond in aromatic azo compounds to the corresponding amines. Preferred substrates are methyl red, amaranth and p-aminoazobenzene sulfonamide (PAABSA). This chain is FMN-dependent NADH:quinone oxidoreductase 3, found in Pseudomonas aeruginosa (strain ATCC 15692 / DSM 22644 / CIP 104116 / JCM 14847 / LMG 12228 / 1C / PRS 101 / PAO1).